A 119-amino-acid polypeptide reads, in one-letter code: DNA-binding protein MMP0157 (119 aa).

The span at 1–12 shows a compositional bias: basic and acidic residues; that stretch reads MNPEEIRQRRLQ. The tract at residues 1 to 35 is disordered; the sequence is MNPEEIRQRRLQEMQAKAQAQGAANDPEAQRQMQE.

Belongs to the PDCD5 family.

The protein is DNA-binding protein MMP0157 of Methanococcus maripaludis (strain DSM 14266 / JCM 13030 / NBRC 101832 / S2 / LL).